Consider the following 270-residue polypeptide: MRASSKKKVLVFDSGVGGLSVFQEIHQLLPHLDYFYLFDNEAYPYGELDQNVLISRVNQLVSALVAEHHIDIVVIACNTASTIVLPSLRDNLSVPVVGVVPAIKPASLLATQGVGLIATPATVTRQYTHELIRDFAQGKPVELLGSTRLVDMAEEKLRGESVPLDELKSILSPLCNKVDVAVLGCTHFPLIKNEIQQVLGSNVVLIDSGEAIARRVKALLSCGELEEKEEGIKRIFASAPPWQEDALNICLAKLGFNPVQIYRHLGVSDR.

Residues 13-14 (DS) and 45-46 (YG) each bind substrate. The active-site Proton donor/acceptor is the C77. 78-79 (NT) is a binding site for substrate. C185 serves as the catalytic Proton donor/acceptor. Substrate is bound at residue 186-187 (TH).

This sequence belongs to the aspartate/glutamate racemases family.

It carries out the reaction L-glutamate = D-glutamate. It functions in the pathway cell wall biogenesis; peptidoglycan biosynthesis. Functionally, provides the (R)-glutamate required for cell wall biosynthesis. The chain is Glutamate racemase from Vibrio parahaemolyticus serotype O3:K6 (strain RIMD 2210633).